Consider the following 257-residue polypeptide: GTP cyclohydrolase FolE2 (257 aa).

The protein belongs to the GTP cyclohydrolase IV family.

The catalysed reaction is GTP + H2O = 7,8-dihydroneopterin 3'-triphosphate + formate + H(+). It functions in the pathway cofactor biosynthesis; 7,8-dihydroneopterin triphosphate biosynthesis; 7,8-dihydroneopterin triphosphate from GTP: step 1/1. In terms of biological role, converts GTP to 7,8-dihydroneopterin triphosphate. This Dictyoglomus turgidum (strain DSM 6724 / Z-1310) protein is GTP cyclohydrolase FolE2.